A 276-amino-acid polypeptide reads, in one-letter code: Ribosomal RNA small subunit methyltransferase A (276 aa).

S-adenosyl-L-methionine-binding residues include N27, L29, G54, E75, D101, and N122.

This sequence belongs to the class I-like SAM-binding methyltransferase superfamily. rRNA adenine N(6)-methyltransferase family. RsmA subfamily.

Its subcellular location is the cytoplasm. The catalysed reaction is adenosine(1518)/adenosine(1519) in 16S rRNA + 4 S-adenosyl-L-methionine = N(6)-dimethyladenosine(1518)/N(6)-dimethyladenosine(1519) in 16S rRNA + 4 S-adenosyl-L-homocysteine + 4 H(+). Functionally, specifically dimethylates two adjacent adenosines (A1518 and A1519) in the loop of a conserved hairpin near the 3'-end of 16S rRNA in the 30S particle. May play a critical role in biogenesis of 30S subunits. The chain is Ribosomal RNA small subunit methyltransferase A from Brucella suis (strain ATCC 23445 / NCTC 10510).